We begin with the raw amino-acid sequence, 233 residues long: Leucyl/phenylalanyl-tRNA--protein transferase (233 aa).

It belongs to the L/F-transferase family.

It localises to the cytoplasm. It carries out the reaction N-terminal L-lysyl-[protein] + L-leucyl-tRNA(Leu) = N-terminal L-leucyl-L-lysyl-[protein] + tRNA(Leu) + H(+). The catalysed reaction is N-terminal L-arginyl-[protein] + L-leucyl-tRNA(Leu) = N-terminal L-leucyl-L-arginyl-[protein] + tRNA(Leu) + H(+). The enzyme catalyses L-phenylalanyl-tRNA(Phe) + an N-terminal L-alpha-aminoacyl-[protein] = an N-terminal L-phenylalanyl-L-alpha-aminoacyl-[protein] + tRNA(Phe). Functions in the N-end rule pathway of protein degradation where it conjugates Leu, Phe and, less efficiently, Met from aminoacyl-tRNAs to the N-termini of proteins containing an N-terminal arginine or lysine. The sequence is that of Leucyl/phenylalanyl-tRNA--protein transferase from Desulfatibacillum aliphaticivorans.